Reading from the N-terminus, the 368-residue chain is S-adenosylmethionine:tRNA ribosyltransferase-isomerase (368 aa).

It belongs to the QueA family. In terms of assembly, monomer.

Its subcellular location is the cytoplasm. It carries out the reaction 7-aminomethyl-7-carbaguanosine(34) in tRNA + S-adenosyl-L-methionine = epoxyqueuosine(34) in tRNA + adenine + L-methionine + 2 H(+). The protein operates within tRNA modification; tRNA-queuosine biosynthesis. In terms of biological role, transfers and isomerizes the ribose moiety from AdoMet to the 7-aminomethyl group of 7-deazaguanine (preQ1-tRNA) to give epoxyqueuosine (oQ-tRNA). The sequence is that of S-adenosylmethionine:tRNA ribosyltransferase-isomerase from Methylorubrum extorquens (strain CM4 / NCIMB 13688) (Methylobacterium extorquens).